Consider the following 181-residue polypeptide: Probable nicotinate-nucleotide adenylyltransferase (181 aa).

This sequence belongs to the NadD family.

It carries out the reaction nicotinate beta-D-ribonucleotide + ATP + H(+) = deamido-NAD(+) + diphosphate. It participates in cofactor biosynthesis; NAD(+) biosynthesis; deamido-NAD(+) from nicotinate D-ribonucleotide: step 1/1. Catalyzes the reversible adenylation of nicotinate mononucleotide (NaMN) to nicotinic acid adenine dinucleotide (NaAD). In Campylobacter jejuni subsp. jejuni serotype O:23/36 (strain 81-176), this protein is Probable nicotinate-nucleotide adenylyltransferase.